The following is a 690-amino-acid chain: MAAGVEAAAEVAATEPKMEEESGAPCVPSGNGAPVPKGEERPTQNEKRKEKNIKRGGNRFEPYANPTKRYRAFITNIPFDVKWQSLKDLVKEKVGEVTYVELLMDAEGKSRGCAVVEFKMEESMKKAAEVLNKHSLSGRPLKVKEDPDGEHARRAMQKAGRLGSTVFVANLDYKVGWKKLKEVFSMAGVVVRADILEDKDGKSRGIGTVTFEQSIEAVQAISMFNGQLLFDRPMHVKMDERALPKGDFFPPERPQQLPHGLGGIGMGLGPGGQPIDANHLNKGIGMGNLGPAGMGMEGIGFGINKIGGMEGPFGGGMENMGRFGSGMNMGRINEILSNALKRGEIIAKQGGSGAGGSVPGIERMGPGIDRISGAGMERMGAGLGHGMDRVGSEIERMGLVMDRMGSVERMGSGIERMGPLGLDHMASSIERMGQTMERIGSGVERMGAGMGFGLERMAAPIDRVGQTIERMGSGVERMGPAIERMGLSMDRMVPTGMGAGLERMGPVMDRMATGLERMGANNLERMGLERMGANSLERMGLERMGANSLERMGPAMGPALGAGIERMGLAMGGAGGASFDRTIEMERGNFGGSFAGSFGGAGGHAPGVARKACQIFVRNLPFDFTWKMLKDKFNECGHVLYADIKMENGKSKGCGVVKFESPEVAERACRMMNGMKLSGREIDVRIDRNA.

Residues 1 to 13 (MAAGVEAAAEVAA) are compositionally biased toward low complexity. Residues 1–63 (MAAGVEAAAE…KRGGNRFEPY (63 aa)) form a disordered region. The residue at position 2 (Ala2) is an N-acetylalanine. Lys17 participates in a covalent cross-link: Glycyl lysine isopeptide (Lys-Gly) (interchain with G-Cter in SUMO2). The residue at position 29 (Ser29) is a Phosphoserine. Residues Lys37, Lys68, and Lys82 each participate in a glycyl lysine isopeptide (Lys-Gly) (interchain with G-Cter in SUMO2) cross-link. A compositionally biased stretch (basic and acidic residues) spans 37–49 (KGEERPTQNEKRK). RRM domains are found at residues 70–148 (YRAF…EDPD) and 164–241 (STVF…MDER). Ser85 carries the post-translational modification Phosphoserine. Residues Lys87 and Lys126 each participate in a glycyl lysine isopeptide (Lys-Gly) (interchain with G-Cter in SUMO2) cross-link. Lys133 carries the N6-acetyllysine; alternate modification. Lys133 participates in a covalent cross-link: Glycyl lysine isopeptide (Lys-Gly) (interchain with G-Cter in SUMO2); alternate. Residues Lys142 and Lys144 each participate in a glycyl lysine isopeptide (Lys-Gly) (interchain with G-Cter in SUMO2) cross-link. Ser164 is modified (phosphoserine). A Glycyl lysine isopeptide (Lys-Gly) (interchain with G-Cter in SUMO2) cross-link involves residue Lys181. An N6-acetyllysine; alternate modification is found at Lys237. Residue Lys237 forms a Glycyl lysine isopeptide (Lys-Gly) (interchain with G-Cter in SUMO2); alternate linkage. Glycyl lysine isopeptide (Lys-Gly) (interchain with G-Cter in SUMO2) cross-links involve residues Lys245 and Lys305. A phosphoserine mark is found at Ser325 and Ser337. Glycyl lysine isopeptide (Lys-Gly) (interchain with G-Cter in SUMO2) cross-links involve residues Lys341 and Lys348. Phosphoserine is present on Ser357. 4 repeat units span residues 360–365 (GIERMG), 367–372 (GIDRIS), 375–380 (GMERMG), and 386–391 (GMDRVG). Residues 360 to 568 (GIERMGPGID…ALGAGIERMG (209 aa)) are 27 X 6 AA repeats of [GEVSTPAN]-[ILMV]-[DE]-[RH]-[MLVI]-[GAV]. Ser392 carries the post-translational modification Phosphoserine. 3 repeat units span residues 393–398 (EIERMG), 400–405 (VMDRMG), and 406–411 (SVERMG). A Phosphoserine modification is found at Ser412. 4 consecutive repeat copies span residues 413-418 (GIERMG), 421-426 (GLDHMA), 428-433 (SIERMG), and 435-440 (TMERIG). Ser428 bears the Phosphoserine mark. Ser441 carries the post-translational modification Phosphoserine. Repeat copies occupy residues 442–447 (GVERMG), 453–458 (GLERMA), 460–465 (PIDRVG), 467–472 (TIERMG), 474–479 (GVERMG), 481–486 (AIERMG), 488–493 (SMDRMV), 500–505 (GLERMG), 507–512 (VMDRMA), 514–519 (GLERMG), 522–527 (NLERMG), 528–532 (LERMG), 535–540 (SLERMG), 541–545 (LERMG), 548–553 (SLERMG), and 563–568 (GIERMG). Arg456 bears the Omega-N-methylarginine mark. At Ser488 the chain carries Phosphoserine. Phosphoserine is present on Ser535. Ser548 is modified (phosphoserine). 3 positions are modified to phosphoserine: Ser578, Ser593, and Ser597. Lys611 is covalently cross-linked (Glycyl lysine isopeptide (Lys-Gly) (interchain with G-Cter in SUMO2)). Residues 613 to 689 (CQIFVRNLPF…REIDVRIDRN (77 aa)) form the RRM 3 domain. Residue Thr625 is modified to Phosphothreonine. Residue Lys627 forms a Glycyl lysine isopeptide (Lys-Gly) (interchain with G-Cter in SUMO2) linkage. An N6-acetyllysine modification is found at Lys632. Glycyl lysine isopeptide (Lys-Gly) (interchain with G-Cter in SUMO2) cross-links involve residues Lys645 and Lys652. At Lys658 the chain carries N6-acetyllysine; alternate. A Glycyl lysine isopeptide (Lys-Gly) (interchain with G-Cter in SUMO2); alternate cross-link involves residue Lys658. Lys658 is covalently cross-linked (Glycyl lysine isopeptide (Lys-Gly) (interchain with G-Cter in SUMO1); alternate). At Ser661 the chain carries Phosphoserine. A Glycyl lysine isopeptide (Lys-Gly) (interchain with G-Cter in SUMO2) cross-link involves residue Lys676.

Identified in the spliceosome C complex. Interacts with PPIA/CYPA. Post-translationally, sumoylated. Expressed in all tissues tested, including liver, heart, lung, skeletal muscle, kidney, stomach, large intestine, small intestine, pancreas, spleen, peritoneal macrophage and thyroid.

The protein resides in the nucleus matrix. In terms of biological role, pre-mRNA binding protein, binds avidly to poly(G) and poly(U) RNA homopolymers. Involved in splicing. Acts as a receptor for carcinoembryonic antigen in Kupffer cells, may initiate a series of signaling events leading to tyrosine phosphorylation of proteins and induction of IL-1 alpha, IL-6, IL-10 and tumor necrosis factor alpha cytokines. The polypeptide is Heterogeneous nuclear ribonucleoprotein M (Hnrnpm) (Rattus norvegicus (Rat)).